An 804-amino-acid polypeptide reads, in one-letter code: Phenylalanine--tRNA ligase beta subunit (804 aa).

The tRNA-binding domain maps to 40-155 (GEGIKGVVIG…NDAETGSDAL (116 aa)). Residues 409-484 (IEANNIHVSA…RLYGYDNIPS (76 aa)) enclose the B5 domain. Residues Asp462, Asp468, Glu471, and Glu472 each coordinate Mg(2+). An FDX-ACB domain is found at 710 to 803 (PKYPSVTRDI…LEDTYQAVLR (94 aa)).

It belongs to the phenylalanyl-tRNA synthetase beta subunit family. Type 1 subfamily. As to quaternary structure, tetramer of two alpha and two beta subunits. Mg(2+) serves as cofactor.

The protein localises to the cytoplasm. It carries out the reaction tRNA(Phe) + L-phenylalanine + ATP = L-phenylalanyl-tRNA(Phe) + AMP + diphosphate + H(+). This is Phenylalanine--tRNA ligase beta subunit (pheT) from Bacillus subtilis (strain 168).